Here is a 695-residue protein sequence, read N- to C-terminus: Exocyst complex component EXO70C2 (695 aa).

Basic and acidic residues predominate over residues 1–36; the sequence is MEKNDKDPDHDDKSKGDEKGDVVSDAHPSDDAHHQD. Disordered stretches follow at residues 1–71 and 210–229; these read MEKN…EEAP and VVTD…QDHQ. T212 carries the phosphothreonine modification. Phosphoserine occurs at positions 215 and 217. T446 carries the phosphothreonine modification. Phosphoserine occurs at positions 494 and 605.

Belongs to the EXO70 family. As to quaternary structure, interacts with ROH1A and ROH1D independently of its phosphorylation status. In terms of processing, phosphorylation on Ser and Thr residues promotes its ability to repress pollen tube growth and to regulate cellular architecture at the pollen tube tip. Expressed in anthers, pollen and root trichoblast cells. Also observed in anther tapetum.

The protein localises to the cytoplasm. In terms of biological role, required for optimal tip growth of pollen tube; dose-dependent negative regulator of exocyst function in pollen tube growth and cellular architecture at the pollen tube tip, probably by modulating membrane trafficking and exocytosis dynamics. The polypeptide is Exocyst complex component EXO70C2 (Arabidopsis thaliana (Mouse-ear cress)).